The primary structure comprises 514 residues: CENP-B homolog protein 2 (514 aa).

In terms of domain architecture, HTH CENPB-type spans 70–145 (QIRRNRQGKY…KKRCLKHGLK (76 aa)). The DDE-1 domain maps to 172–384 (FDPKDIFNMD…FEPSIIYNCF (213 aa)).

The protein resides in the nucleus. It is found in the chromosome. Its subcellular location is the centromere. In terms of biological role, binds to the central core and core-associated repeat regions of centromeric heterochromatin. The polypeptide is CENP-B homolog protein 2 (cbh2) (Schizosaccharomyces pombe (strain 972 / ATCC 24843) (Fission yeast)).